Here is a 435-residue protein sequence, read N- to C-terminus: Trigger factor (435 aa).

Positions methionine 125–arginine 147 are disordered. The PPIase FKBP-type domain occupies glycine 164–proline 249.

Belongs to the FKBP-type PPIase family. Tig subfamily.

It is found in the cytoplasm. It carries out the reaction [protein]-peptidylproline (omega=180) = [protein]-peptidylproline (omega=0). Involved in protein export. Acts as a chaperone by maintaining the newly synthesized protein in an open conformation. Functions as a peptidyl-prolyl cis-trans isomerase. The sequence is that of Trigger factor from Limosilactobacillus fermentum (strain NBRC 3956 / LMG 18251) (Lactobacillus fermentum).